A 692-amino-acid polypeptide reads, in one-letter code: UvrABC system protein B (692 aa).

The 387-residue stretch at 32-418 (DNIENGEKAQ…QTDTIVEQII (387 aa)) folds into the Helicase ATP-binding domain. 45–52 (GATGTGKT) contributes to the ATP binding site. The short motif at 98–121 (YYDYYQPEAYVPSSDTYIEKDSSV) is the Beta-hairpin element. One can recognise a Helicase C-terminal domain in the interval 436–631 (QIDDLVGEIH…TIKKEIRDLI (196 aa)). A UVR domain is found at 656–691 (KALVKKLEKEMQQAASALDFEGAAQLRDMVLELRAM).

The protein belongs to the UvrB family. As to quaternary structure, forms a heterotetramer with UvrA during the search for lesions. Interacts with UvrC in an incision complex.

The protein resides in the cytoplasm. Functionally, the UvrABC repair system catalyzes the recognition and processing of DNA lesions. A damage recognition complex composed of 2 UvrA and 2 UvrB subunits scans DNA for abnormalities. Upon binding of the UvrA(2)B(2) complex to a putative damaged site, the DNA wraps around one UvrB monomer. DNA wrap is dependent on ATP binding by UvrB and probably causes local melting of the DNA helix, facilitating insertion of UvrB beta-hairpin between the DNA strands. Then UvrB probes one DNA strand for the presence of a lesion. If a lesion is found the UvrA subunits dissociate and the UvrB-DNA preincision complex is formed. This complex is subsequently bound by UvrC and the second UvrB is released. If no lesion is found, the DNA wraps around the other UvrB subunit that will check the other stand for damage. This chain is UvrABC system protein B, found in Lactococcus lactis subsp. lactis (strain IL1403) (Streptococcus lactis).